The chain runs to 494 residues: Cysteine--tRNA ligase (494 aa).

Cys-29 lines the Zn(2+) pocket. The short motif at Val-31–His-41 is the 'HIGH' region element. Zn(2+) is bound by residues Cys-216, His-241, and Glu-245. The 'KMSKS' region motif lies at Lys-273–Ser-277. An ATP-binding site is contributed by Lys-276.

The protein belongs to the class-I aminoacyl-tRNA synthetase family. In terms of assembly, monomer. The cofactor is Zn(2+).

The protein resides in the cytoplasm. The enzyme catalyses tRNA(Cys) + L-cysteine + ATP = L-cysteinyl-tRNA(Cys) + AMP + diphosphate. The sequence is that of Cysteine--tRNA ligase from Cyanothece sp. (strain PCC 7425 / ATCC 29141).